Consider the following 340-residue polypeptide: tRNA N6-adenosine threonylcarbamoyltransferase (340 aa).

The Fe cation site is built by His-113 and His-117. Residues 135-139 (LVSGG), Asp-169, Gly-182, Asp-186, and Asn-274 each bind substrate. Asp-302 contacts Fe cation.

It belongs to the KAE1 / TsaD family. The cofactor is Fe(2+).

Its subcellular location is the cytoplasm. The catalysed reaction is L-threonylcarbamoyladenylate + adenosine(37) in tRNA = N(6)-L-threonylcarbamoyladenosine(37) in tRNA + AMP + H(+). Its function is as follows. Required for the formation of a threonylcarbamoyl group on adenosine at position 37 (t(6)A37) in tRNAs that read codons beginning with adenine. Is involved in the transfer of the threonylcarbamoyl moiety of threonylcarbamoyl-AMP (TC-AMP) to the N6 group of A37, together with TsaE and TsaB. TsaD likely plays a direct catalytic role in this reaction. The chain is tRNA N6-adenosine threonylcarbamoyltransferase from Mycobacterium sp. (strain KMS).